A 486-amino-acid chain; its full sequence is ATP-dependent rRNA helicase rrp3 (486 aa).

The segment at 1–60 (MSSVKRRKTDKNPSLEGLKSKKTKESKKESHTPSPEPIEDTEDNRVIEETEEAEEDDAPK) is disordered. The Q motif signature appears at 60–88 (KSFKDLGIVDSLCEACDTLGYKAPTPIQR). Residues 91–262 (IPLALQGRDL…RASLKDPLRV (172 aa)) enclose the Helicase ATP-binding domain. An ATP-binding site is contributed by 104–111 (AETGSGKT). A DEAD box motif is present at residues 210-213 (DEAD). The region spanning 286–434 (HKDTYLIYLL…EYPTVKDEVM (149 aa)) is the Helicase C-terminal domain. 2 stretches are compositionally biased toward basic and acidic residues: residues 447–460 (ARNEMKNLHEDRGK) and 476–486 (RGRDEMDREEG). Residues 447 to 486 (ARNEMKNLHEDRGKKGAVLKGRRPANGAKRGRDEMDREEG) form a disordered region.

The protein belongs to the DEAD box helicase family. DDX47/RRP3 subfamily. As to quaternary structure, interacts with the SSU processome.

It localises to the nucleus. It carries out the reaction ATP + H2O = ADP + phosphate + H(+). Functionally, ATP-dependent rRNA helicase required for pre-ribosomal RNA processing. Involved in the maturation of the 35S-pre-rRNA and to its cleavage to mature 18S rRNA. The sequence is that of ATP-dependent rRNA helicase rrp3 from Botryotinia fuckeliana (strain B05.10) (Noble rot fungus).